A 570-amino-acid chain; its full sequence is Glycine--tRNA ligase (570 aa).

Substrate contacts are provided by Arg-95 and Glu-159. Residues 191-193, 201-206, 312-313, and 426-429 each bind ATP; these read RNE, IRLREF, EV, and GLDR. 206 to 210 is a substrate binding site; it reads FNQAE. 422 to 426 lines the substrate pocket; the sequence is EPSFG.

Belongs to the class-II aminoacyl-tRNA synthetase family.

The protein resides in the cytoplasm. The enzyme catalyses tRNA(Gly) + glycine + ATP = glycyl-tRNA(Gly) + AMP + diphosphate. In terms of biological role, catalyzes the attachment of glycine to tRNA(Gly). The protein is Glycine--tRNA ligase of Archaeoglobus fulgidus (strain ATCC 49558 / DSM 4304 / JCM 9628 / NBRC 100126 / VC-16).